A 377-amino-acid polypeptide reads, in one-letter code: Chaperone MoxR1 (377 aa).

The segment at 1-33 is disordered; it reads MTSAGGFPAGAGGYQTPGGHSASPAHEAPPGGA. The span at 7-16 shows a compositional bias: gly residues; sequence FPAGAGGYQT. A compositionally biased stretch (low complexity) spans 19–33; sequence GHSASPAHEAPPGGA. ATP is bound at residue 78–85; sequence GVPGVAKT.

This sequence belongs to the MoxR family. In terms of assembly, interacts with RipA. Interacts with host Toll-like receptor 4 (TLR4).

Its function is as follows. Displays ATP-enhanced chaperone activity. Required for the proper folding of the peptidoglycan endopeptidase RipA and its secretion through the TAT secretion system. In vitro, prevents thermal aggregation of MalZ protein and protects the functional activity of the restriction enzyme NdeI from thermal inactivation. Functionally, could be a moonlighting protein that uses a multipronged approach to dampen host-directed immunity for efficient replication, survival and pathogenesis. Can enhance virulence by inhibiting autophagy and apoptosis, and disrupting cellular bioenergetics. Binds and activates host TLR4 on the surface of macrophage cells, leading to the activation of the host NFKB and MAPK signaling cascades and enhanced secretion of proinflammatory cytokines. Inhibits autophagic flux via activation of PI3K-AKT-MTOR-ULK1 signaling cascade and represses apoptosis via inhibiting protooncogene c-FOS and MAPK JNK1/2. Also induces robust disruption of cellular bioenergetics by metabolic reprogramming to rewire the citric acid cycle intermediates for its benefit. This Mycobacterium tuberculosis (strain ATCC 25618 / H37Rv) protein is Chaperone MoxR1.